We begin with the raw amino-acid sequence, 729 residues long: Fatty acid oxidation complex subunit alpha (729 aa).

An enoyl-CoA hydratase/isomerase region spans residues 1 to 189 (MLYKGDTLYL…KIGLVDGVVK (189 aa)). Aspartate 296 is a substrate binding site. The tract at residues 311–729 (ETPKQAAVLG…ARPVGDLKTA (419 aa)) is 3-hydroxyacyl-CoA dehydrogenase. NAD(+)-binding positions include methionine 324, aspartate 343, 400 to 402 (VVE), lysine 407, and serine 429. Histidine 450 acts as the For 3-hydroxyacyl-CoA dehydrogenase activity in catalysis. Asparagine 453 is a binding site for NAD(+). 2 residues coordinate substrate: asparagine 500 and tyrosine 660. The interval 708-729 (RHNEPYYPPVEPARPVGDLKTA) is disordered.

It in the N-terminal section; belongs to the enoyl-CoA hydratase/isomerase family. In the C-terminal section; belongs to the 3-hydroxyacyl-CoA dehydrogenase family. In terms of assembly, heterotetramer of two alpha chains (FadB) and two beta chains (FadA).

The catalysed reaction is a (3S)-3-hydroxyacyl-CoA + NAD(+) = a 3-oxoacyl-CoA + NADH + H(+). It carries out the reaction a (3S)-3-hydroxyacyl-CoA = a (2E)-enoyl-CoA + H2O. It catalyses the reaction a 4-saturated-(3S)-3-hydroxyacyl-CoA = a (3E)-enoyl-CoA + H2O. The enzyme catalyses (3S)-3-hydroxybutanoyl-CoA = (3R)-3-hydroxybutanoyl-CoA. The catalysed reaction is a (3Z)-enoyl-CoA = a 4-saturated (2E)-enoyl-CoA. It carries out the reaction a (3E)-enoyl-CoA = a 4-saturated (2E)-enoyl-CoA. It participates in lipid metabolism; fatty acid beta-oxidation. In terms of biological role, involved in the aerobic and anaerobic degradation of long-chain fatty acids via beta-oxidation cycle. Catalyzes the formation of 3-oxoacyl-CoA from enoyl-CoA via L-3-hydroxyacyl-CoA. It can also use D-3-hydroxyacyl-CoA and cis-3-enoyl-CoA as substrate. In Escherichia coli O81 (strain ED1a), this protein is Fatty acid oxidation complex subunit alpha.